The chain runs to 572 residues: Proline--tRNA ligase (572 aa).

It belongs to the class-II aminoacyl-tRNA synthetase family. ProS type 1 subfamily. As to quaternary structure, homodimer.

The protein localises to the cytoplasm. It carries out the reaction tRNA(Pro) + L-proline + ATP = L-prolyl-tRNA(Pro) + AMP + diphosphate. In terms of biological role, catalyzes the attachment of proline to tRNA(Pro) in a two-step reaction: proline is first activated by ATP to form Pro-AMP and then transferred to the acceptor end of tRNA(Pro). As ProRS can inadvertently accommodate and process non-cognate amino acids such as alanine and cysteine, to avoid such errors it has two additional distinct editing activities against alanine. One activity is designated as 'pretransfer' editing and involves the tRNA(Pro)-independent hydrolysis of activated Ala-AMP. The other activity is designated 'posttransfer' editing and involves deacylation of mischarged Ala-tRNA(Pro). The misacylated Cys-tRNA(Pro) is not edited by ProRS. This Bacillus licheniformis (strain ATCC 14580 / DSM 13 / JCM 2505 / CCUG 7422 / NBRC 12200 / NCIMB 9375 / NCTC 10341 / NRRL NRS-1264 / Gibson 46) protein is Proline--tRNA ligase.